A 153-amino-acid polypeptide reads, in one-letter code: Jacalin-related lectin Calsepa (153 aa).

A2 is modified (N-acetylalanine). The Jacalin-type lectin domain maps to 6-152; that stretch reads DTISGPWGNN…VDAIGTYNRH (147 aa). N-glycan binding stretches follow at residues 17–18, 95–96, and 140–144; these read GN, DN, and GYYVD.

Belongs to the jacalin lectin family. As to quaternary structure, homodimer. Post-translationally, not glycosylated. As to expression, rhizome (at protein level). Detected in the cortex and the pith of rhizome. Not detected in vascular tissues, pericycle, endodermis or rhizodermis.

It is found in the cytoplasm. Its activity is regulated as follows. Hemagglutinating activity is most inhibited by methyl alpha-mannopyranoside. This activity is inhibited to a less extent (about a third of the inhibition of that of methyl alpha-mannopyranoside) by methyl alpha-glucoside, other alpha-glucosides, such as maltose, isomaltose, panose or palatinose, and alpha-glucosides modified at the second position, such as methyl 2-deoxy-alpha-arabinoglucopyranoside or methyl 2-acetamido-2-deoxy alpha-glucopyranoside. Mildly inhibited by free monosaccharides, with glucose presenting at least 20-fold less inhibitory effect on hemagglutinating activity than mannose. Glycoproteins are somewhat inhibitory, the best being asialothyroglobulin and ovomucoid. Not inhibited by isomaltitol, sucrose or trehalose. Functionally, mannose-binding lectin. Preferentially binds mannose at concentrations ranging between 5 and 25 mM, but also binds glucose. Has a marked preference for methylated sugar derivatives, such as alpha-MeMan and alpha-MeGlc, at concentration down to 5 mM. Binds to N-glycans, but not to glycolipid-type or other type of glycans. Binds N-linked high-mannose-type glycans. Has a preference for smaller (Man(2)-Man(6)) high-mannose-type glycans to larger (Man(7)-Man(9)) ones. Recognizes both alpha1-6 extended and alpha1-3 extended monoantennary glycans. The addition of alpha1-2Man to the Man-alpha1-3Man-beta branch results in a significant loss of affinity, but beta1-2GlcNAc has some affinity. Has less affinity for biantennary glycans. However, affinity is significant for the biantennary complex-type N-glycans with bisecting GlcNAc. No affinity is observed for tri- and tetra-antennary glycans. Binds bisected glycans of the mouse brain. Selectively binds to bisecting N-glycans which are in back-fold conformation, and does not favor a glycan with an extend conformation. Has hemagglutinating activity against rabbit erythrocytes at 0.3 ug/ml and against trypsin-treated human erythrocytes at 5 ug/ml. Has mitogenic activity in murine cells. This Calystegia sepium (Hedge bindweed) protein is Jacalin-related lectin Calsepa.